The sequence spans 356 residues: Replication factor C subunit 3 (356 aa).

Position 20 is an N6-acetyllysine (Lys20). Ser125 carries the post-translational modification Phosphoserine.

Belongs to the activator 1 small subunits family. Subunit of the RFC complex, an heteropentameric complex consisting of a large subunit RFC1 and four small subunits RFC2, RFC3, RFC4 and RFC5; the RFC complex interacts with PCNA. Forms an heterotetrameric complex with RFC2, RFC4 and RFC5; this complex has ATPase activity but is not stimulated by PCNA. The heterotetramer of subunits RFC2, RFC3, RFC4 and RFC5 interacts with RAD17. Interacts with CNTD1; this interaction facilitates crossover formation.

It localises to the nucleus. Functionally, subunit of the replication factor C (RFC) complex which acts during elongation of primed DNA templates by DNA polymerases delta and epsilon, and is necessary for ATP-dependent loading of proliferating cell nuclear antigen (PCNA) onto primed DNA. This Homo sapiens (Human) protein is Replication factor C subunit 3 (RFC3).